The sequence spans 274 residues: 4-deoxy-L-threo-5-hexosulose-uronate ketol-isomerase (274 aa).

Residues histidine 192, histidine 194, glutamate 199, and histidine 241 each coordinate Zn(2+).

It belongs to the KduI family. Zn(2+) is required as a cofactor.

It carries out the reaction 5-dehydro-4-deoxy-D-glucuronate = 3-deoxy-D-glycero-2,5-hexodiulosonate. The protein operates within glycan metabolism; pectin degradation; 2-dehydro-3-deoxy-D-gluconate from pectin: step 4/5. Catalyzes the isomerization of 5-dehydro-4-deoxy-D-glucuronate to 3-deoxy-D-glycero-2,5-hexodiulosonate. This chain is 4-deoxy-L-threo-5-hexosulose-uronate ketol-isomerase, found in Shigella boydii serotype 18 (strain CDC 3083-94 / BS512).